The primary structure comprises 427 residues: MSRSEALFAQAQKHIPGGVNSPVRAFKSVGGTPLFFKHAEGAYVVDEDDKRYVDYVGSWGPMILGHGHPDVLDSVRRQLEHGLSYGAPTAMETEMADLVCSIVPSMEMVRMVSSGTEATMSAIRLARGYTGRDAIIKFEGCYHGHSDSLLVKAGSGLLTQGVPSSAGVPADFAKHTLTLPFNDIAAVEKTLAEVGQTVACIIVEPVAGNMNCVPPAPGFLEGLREQCDKHGVVLIFDEVMTGFRVSLGGAQGHYGIKPDLSTFGKIVGGGMPVGCFGGKREIMGCIAPLGPVYQAGTLSGNPLAMAAGLTTLKLISRPGFHAELTDYTSRMLDGLQQRADAAGVPFVTTQAGAMFGLYFSGADDIVTFEDVMASDAERFKRFFHLMLDGGVYLAPSAFEAGFTSIAHGDKELQITLDAAEKAFAALK.

At Lys-265 the chain carries N6-(pyridoxal phosphate)lysine.

This sequence belongs to the class-III pyridoxal-phosphate-dependent aminotransferase family. HemL subfamily. As to quaternary structure, homodimer. Pyridoxal 5'-phosphate serves as cofactor.

It localises to the cytoplasm. The enzyme catalyses (S)-4-amino-5-oxopentanoate = 5-aminolevulinate. It participates in porphyrin-containing compound metabolism; protoporphyrin-IX biosynthesis; 5-aminolevulinate from L-glutamyl-tRNA(Glu): step 2/2. The polypeptide is Glutamate-1-semialdehyde 2,1-aminomutase (Pseudomonas putida (strain ATCC 47054 / DSM 6125 / CFBP 8728 / NCIMB 11950 / KT2440)).